The following is a 200-amino-acid chain: Dephospho-CoA kinase (200 aa).

One can recognise a DPCK domain in the interval 3-200 (RIGLTGGIGS…LIAEILTRIK (198 aa)). Position 11–16 (11–16 (GSGKST)) interacts with ATP.

This sequence belongs to the CoaE family.

It is found in the cytoplasm. It carries out the reaction 3'-dephospho-CoA + ATP = ADP + CoA + H(+). It participates in cofactor biosynthesis; coenzyme A biosynthesis; CoA from (R)-pantothenate: step 5/5. Catalyzes the phosphorylation of the 3'-hydroxyl group of dephosphocoenzyme A to form coenzyme A. The chain is Dephospho-CoA kinase from Corynebacterium efficiens (strain DSM 44549 / YS-314 / AJ 12310 / JCM 11189 / NBRC 100395).